We begin with the raw amino-acid sequence, 386 residues long: MTVLKMTDLDLKGKRVLIREDLNVPVKDGVVKSDARILASLPTIKLALEKGAAVMVCSHLGRPTEGEYSEENSLKPVADYLSGALGREVPLLGEYLDGVKVEPGQVVLFENVRFNKGEKKNADELAQRYAALCDVFVMDAFGTAHRAEGSTHGVARFAKVACAGPLLAAELEALGKALDNPQRPMAAIVAGSKVSTKLDVLNSLSQVCDQLIVGGGIANTFLAAAGYKVGKSLYEADLVDTAKAIAAKVSVPLPVDVVVAKAFAESAEATVKAIDEVADDDMILDIGPQTAAQFAELLKSSRTILWNGPVGVFEFDQFGNGTKVLAEAIAASPAFSIAGGGDTLAAIDKYGVGEKISYISTGGGAFLEFVEGKVLPAVAVLEERAR.

Substrate is bound by residues 21-23 (DLN), R36, 59-62 (HLGR), R113, and R146. Residues K197, E314, and 340–343 (GGDT) contribute to the ATP site.

Belongs to the phosphoglycerate kinase family. As to quaternary structure, monomer.

The protein resides in the cytoplasm. It catalyses the reaction (2R)-3-phosphoglycerate + ATP = (2R)-3-phospho-glyceroyl phosphate + ADP. It participates in carbohydrate degradation; glycolysis; pyruvate from D-glyceraldehyde 3-phosphate: step 2/5. In Azotobacter vinelandii (strain DJ / ATCC BAA-1303), this protein is Phosphoglycerate kinase.